A 447-amino-acid chain; its full sequence is Cobyrinate a,c-diamide synthase (447 aa).

A GATase cobBQ-type domain is found at 252-439; sequence KIAIAFDESF…AHQHAVGNPY (188 aa). Residue cysteine 331 is the Nucleophile of the active site.

Belongs to the CobB/CbiA family. Mg(2+) serves as cofactor.

It catalyses the reaction cob(II)yrinate + 2 L-glutamine + 2 ATP + 2 H2O = cob(II)yrinate a,c diamide + 2 L-glutamate + 2 ADP + 2 phosphate + 2 H(+). The enzyme catalyses Ni-sirohydrochlorin + 2 L-glutamine + 2 ATP + 2 H2O = Ni-sirohydrochlorin a,c-diamide + 2 L-glutamate + 2 ADP + 2 phosphate + 2 H(+). It participates in cofactor biosynthesis; adenosylcobalamin biosynthesis; cob(II)yrinate a,c-diamide from sirohydrochlorin (anaerobic route): step 10/10. Its function is as follows. Catalyzes the ATP-dependent amidation of the two carboxylate groups at positions a and c of cobyrinate, using either L-glutamine or ammonia as the nitrogen source. Involved in the biosynthesis of the unique nickel-containing tetrapyrrole coenzyme F430, the prosthetic group of methyl-coenzyme M reductase (MCR), which plays a key role in methanogenesis and anaerobic methane oxidation. Catalyzes the ATP-dependent amidation of the two carboxylate groups at positions a and c of Ni-sirohydrochlorin, using L-glutamine or ammonia as the nitrogen source. The polypeptide is Cobyrinate a,c-diamide synthase (Methanococcus vannielii (strain ATCC 35089 / DSM 1224 / JCM 13029 / OCM 148 / SB)).